The chain runs to 185 residues: MSLGALYVVSGPSGAGKSTVCKLVRERLGINLSISATSRKPRNGEQEGVDYFFITAEEFERKIKNDDFLEYANVHGNYYGTLKSEVEERLKRGEKVLLEIDVQGGVQVKNKFPEANLIFFKTANKEELEKRLRGRNTDSEEVIQARLKNSLKELEYESKYDRVIINNEIEQACNDLISIIENGVK.

The 178-residue stretch at 4–181 (GALYVVSGPS…ACNDLISIIE (178 aa)) folds into the Guanylate kinase-like domain. 11–18 (GPSGAGKS) serves as a coordination point for ATP.

Belongs to the guanylate kinase family.

The protein localises to the cytoplasm. It catalyses the reaction GMP + ATP = GDP + ADP. Essential for recycling GMP and indirectly, cGMP. The protein is Guanylate kinase of Fusobacterium nucleatum subsp. nucleatum (strain ATCC 25586 / DSM 15643 / BCRC 10681 / CIP 101130 / JCM 8532 / KCTC 2640 / LMG 13131 / VPI 4355).